The following is a 409-amino-acid chain: Potassium channel subfamily K member 3 (409 aa).

Over 1–8 (MKRQNVRT) the chain is Cytoplasmic. A helical membrane pass occupies residues 9–29 (LALIVCTFTYLLVGAAVFDAL). N53 carries N-linked (GlcNAc...) asparagine glycosylation. The pore-forming intramembrane region spans 78–101 (WRFAGSFYFAITVITTIGYGHAAP). A helical membrane pass occupies residues 108-128 (VFCMFYALLGIPLTLVMFQSL). At 129 to 158 (GERINTFVRYLLHRAKRGLGMRHAEVSMAN) the chain is on the cytoplasmic side. The helical transmembrane segment at 159 to 179 (MVLIGFVSCISTLCIGAAAFS) threads the bilayer. The segment at residues 184 to 207 (WTFFQAYYYCFITLTTIGFGDYVA) is an intramembrane region (pore-forming). Residues 223–243 (FSFVYILTGLTVIGAFLNLVV) form a helical membrane-spanning segment. The Cytoplasmic segment spans residues 244-409 (LRFMTMNAED…RGLMKRRSSV (166 aa)).

The protein belongs to the two pore domain potassium channel (TC 1.A.1.8) family. Homodimer. Heterodimer with KCNK1. Heterodimer with KCNK9. As to expression, very strong expression in heart, also detected in kidney, brain, skin, testis, lung, skeletal muscle, small intestine and stomach. Not detected in liver, thymus or spleen. Expressed in adrenal glands mainly in zona glomerulosa and zona fasciculata of the cortex. Expressed at higher levels in brown and beige than in white adipocytes.

The protein localises to the cell membrane. The enzyme catalyses K(+)(in) = K(+)(out). The catalysed reaction is Na(+)(in) = Na(+)(out). Its activity is regulated as follows. Activated by halothane and isoflurane. Inhibited by external acidification, diacylglycerol and anandamide. Inactivated by barium. K(+) channel that conducts voltage-dependent outward rectifying currents upon membrane depolarization. Voltage sensing is coupled to K(+) electrochemical gradient in an 'ion flux gating' mode where outward but not inward ion flow opens the gate. Changes ion selectivity and becomes permeable to Na(+) ions in response to extracellular acidification. Protonation of the pH sensor His-98 stabilizes C-type inactivation conformation likely converting the channel from outward K(+)-conducting, to inward Na(+)-conducting to nonconductive state. Homo- and heterodimerizes to form functional channels with distinct regulatory and gating properties. Allows K(+) currents with fast-gating kinetics important for the repolarization and hyperpolarization phases of action potentials. In cerebellar granule cells, heteromeric KCNK3:KCNK9 channel may hyperpolarize the resting membrane potential to limit intrinsic neuronal excitability, but once the action potential threshold is reached, it may support high-frequency action potential firing and increased neuronal excitability. Dispensable for central chemosensory respiration i.e. breathing controlled by brainstem CO2/pH, it rather conducts pH-sensitive currents and controls the firing rate of serotonergic raphe neurons involved in potentiation of the respiratory chemoreflex. Additionally, imparts chemosensitivity to type 1 cells in carotid bodies which respond to a decrease in arterial oxygen pressure or an increase in carbon dioxide pressure or pH to initiate adaptive changes in pulmonary ventilation. In adrenal gland, contributes to the maintenance of a hyperpolarized resting membrane potential of aldosterone-producing cells at zona glomerulosa and limits aldosterone release as part of a regulatory mechanism that controls arterial blood pressure and electrolyte homeostasis. In brown adipocytes, mediates K(+) efflux that counteracts norepinephrine-induced membrane depolarization, limits Ca(2+) efflux and downstream cAMP and PKA signaling, ultimately attenuating lipid oxidation and adaptive thermogenesis. The chain is Potassium channel subfamily K member 3 from Mus musculus (Mouse).